The sequence spans 401 residues: Argininosuccinate synthase (401 aa).

9 to 17 provides a ligand contact to ATP; sequence AYSGGLDTS. Tyrosine 88 contacts L-citrulline. Position 118 (glycine 118) interacts with ATP. L-aspartate-binding residues include threonine 120, asparagine 124, and aspartate 125. Asparagine 124 is an L-citrulline binding site. Residues arginine 128, serine 177, serine 186, glutamate 262, and tyrosine 274 each contribute to the L-citrulline site.

The protein belongs to the argininosuccinate synthase family. Type 1 subfamily. In terms of assembly, homotetramer.

It is found in the cytoplasm. The catalysed reaction is L-citrulline + L-aspartate + ATP = 2-(N(omega)-L-arginino)succinate + AMP + diphosphate + H(+). It functions in the pathway amino-acid biosynthesis; L-arginine biosynthesis; L-arginine from L-ornithine and carbamoyl phosphate: step 2/3. The sequence is that of Argininosuccinate synthase from Chlorobaculum parvum (strain DSM 263 / NCIMB 8327) (Chlorobium vibrioforme subsp. thiosulfatophilum).